A 333-amino-acid polypeptide reads, in one-letter code: tRNA-modifying protein YgfZ (333 aa).

Residues Trp-33 and Trp-195 each coordinate folate.

It belongs to the tRNA-modifying YgfZ family.

Its subcellular location is the cytoplasm. Its function is as follows. Folate-binding protein involved in regulating the level of ATP-DnaA and in the modification of some tRNAs. It is probably a key factor in regulatory networks that act via tRNA modification, such as initiation of chromosomal replication. The sequence is that of tRNA-modifying protein YgfZ from Pectobacterium carotovorum subsp. carotovorum (strain PC1).